The sequence spans 495 residues: Ectonucleoside triphosphate diphosphohydrolase 2 (495 aa).

Residues 1-7 (MAGKVRS) are Cytoplasmic-facing. The chain crosses the membrane as a helical span at residues 8–28 (LLPPLLLAAAGLAGLLLLCVP). The Extracellular segment spans residues 29–462 (TRDVREPPAL…PGLRKGTDFS (434 aa)). An N-linked (GlcNAc...) asparagine glycan is attached at asparagine 64. A disulfide bond links cysteine 75 and cysteine 99. Asparagine 129 carries an N-linked (GlcNAc...) asparagine glycan. The active-site Proton acceptor is the glutamate 165. An ATP-binding site is contributed by 204-208 (GASTQ). 4 disulfide bridges follow: cysteine 242–cysteine 284, cysteine 265–cysteine 310, cysteine 323–cysteine 328, and cysteine 377–cysteine 399. Asparagine 294 carries an N-linked (GlcNAc...) asparagine glycan. N-linked (GlcNAc...) asparagine glycans are attached at residues asparagine 378 and asparagine 443. Residues 463-483 (SWVVLLLLFASALLAALVLLL) traverse the membrane as a helical segment. Residues 484 to 495 (RQVHSAKLPSTI) are Cytoplasmic-facing.

It belongs to the GDA1/CD39 NTPase family. The cofactor is Ca(2+). Mg(2+) is required as a cofactor. In terms of tissue distribution, brain, placenta, skeletal muscle, kidney, pancreas, heart, ovary, testis, colon, small intestine, prostate and pancreas. No expression in adult thymus, spleen, lung, liver and peripheral blood leukocytes.

The protein resides in the cell membrane. Its subcellular location is the endoplasmic reticulum membrane. Its function is as follows. In the nervous system, could hydrolyze ATP and other nucleotides to regulate purinergic neurotransmission. Hydrolyzes ADP only to a marginal extent. The order of activity with different substrates is ATP &gt; GTP &gt; CTP = ITP &gt; UTP &gt;&gt; ADP = UDP. This chain is Ectonucleoside triphosphate diphosphohydrolase 2 (ENTPD2), found in Homo sapiens (Human).